The following is a 174-amino-acid chain: Disulfide bond formation protein B (174 aa).

Residues 1-14 (MLNFLNICSKTRKS) are Cytoplasmic-facing. The chain crosses the membrane as a helical span at residues 15 to 31 (WVLLIFTVVILELIALY). Over 32–49 (LQHIVLIKPCVLCVYQRC) the chain is Periplasmic. Cysteine 41 and cysteine 44 form a disulfide bridge. A helical membrane pass occupies residues 50–65 (ALCGIGIAGLIGTIAP). At 66–71 (FTPLRF) the chain is on the cytoplasmic side. The chain crosses the membrane as a helical span at residues 72–89 (FSIPIWIYSAWKGLLLAK). At 90–144 (EYTDIQLHPSPFFMCDLFVQFPHWLPLNKWWPSMFDADGDCAEYKWYFLSLEISQ) the chain is on the periplasmic side. Residues cysteine 104 and cysteine 130 are joined by a disulfide bond. The helical transmembrane segment at 145-163 (WMLIIFANYLIIAILVSLS) threads the bilayer. Topologically, residues 164 to 174 (QIIDLKKWNNK) are cytoplasmic.

The protein belongs to the DsbB family.

The protein localises to the cell inner membrane. Its function is as follows. Required for disulfide bond formation in some periplasmic proteins. Acts by oxidizing the DsbA protein. The protein is Disulfide bond formation protein B of Blochmanniella pennsylvanica (strain BPEN).